We begin with the raw amino-acid sequence, 163 residues long: UPF0262 protein RPA4530 (163 aa).

The protein belongs to the UPF0262 family.

The chain is UPF0262 protein RPA4530 from Rhodopseudomonas palustris (strain ATCC BAA-98 / CGA009).